The sequence spans 159 residues: Xanthine dehydrogenase iron-sulfur-binding subunit (159 aa).

A 2Fe-2S ferredoxin-type domain is found at 7 to 82; the sequence is ITIECTINGM…GKEIRTLEGE (76 aa). 3 residues coordinate [2Fe-2S] cluster: cysteine 44, cysteine 49, and cysteine 52.

As to quaternary structure, heterotrimer of XdhA, XdhB and XdhC. [2Fe-2S] cluster serves as cofactor.

The protein operates within purine metabolism; hypoxanthine degradation; urate from hypoxanthine: step 1/2. Its function is as follows. Iron-sulfur subunit of the xanthine dehydrogenase complex. This Escherichia coli O157:H7 protein is Xanthine dehydrogenase iron-sulfur-binding subunit (xdhC).